A 208-amino-acid polypeptide reads, in one-letter code: Dual specificity protein phosphatase 22-A (208 aa).

One can recognise a Tyrosine-protein phosphatase domain in the interval 4–144 (GMNKVIDGLY…LQEFQMKQVS (141 aa)). Residue C88 is the Phosphocysteine intermediate of the active site.

It belongs to the protein-tyrosine phosphatase family. Non-receptor class dual specificity subfamily.

It localises to the cytoplasm. Its subcellular location is the nucleus. It carries out the reaction O-phospho-L-tyrosyl-[protein] + H2O = L-tyrosyl-[protein] + phosphate. It catalyses the reaction O-phospho-L-seryl-[protein] + H2O = L-seryl-[protein] + phosphate. The enzyme catalyses O-phospho-L-threonyl-[protein] + H2O = L-threonyl-[protein] + phosphate. In terms of biological role, activates the Jnk signaling pathway. Dephosphorylates and deactivates p38 and stress-activated protein kinase/c-Jun N-terminal kinase (SAPK/JNK). This Danio rerio (Zebrafish) protein is Dual specificity protein phosphatase 22-A.